Reading from the N-terminus, the 320-residue chain is Pyrroline-5-carboxylate reductase 1, mitochondrial (320 aa).

Serine 2 is modified (N-acetylserine). NADP(+) contacts are provided by residues 6-11 and serine 34; that span reads IGAGQL. NADPH is bound by residues alanine 8, glutamine 10, leucine 11, serine 34, aspartate 36, asparagine 56, valine 70, lysine 71, and alanine 97. NADP(+) is bound by residues asparagine 56, 69–72, and 95–97; these read AVKP and CAA. Glutamate 164 lines the L-proline pocket. Residue asparagine 230 coordinates NADPH. Positions 237 and 238 each coordinate L-proline. Serine 278 is subject to Phosphoserine. Residues 292–320 form a disordered region; sequence LDSPPGTSLAPSGHSKLLPRSMAPAGKQD.

It belongs to the pyrroline-5-carboxylate reductase family. As to quaternary structure, homodecamer; composed of 5 homodimers. Interacts with LTO1.

The protein localises to the mitochondrion. It catalyses the reaction L-proline + NADP(+) = (S)-1-pyrroline-5-carboxylate + NADPH + 2 H(+). The enzyme catalyses L-proline + NAD(+) = (S)-1-pyrroline-5-carboxylate + NADH + 2 H(+). It participates in amino-acid biosynthesis; L-proline biosynthesis; L-proline from L-glutamate 5-semialdehyde: step 1/1. Oxidoreductase that catalyzes the last step in proline biosynthesis, which corresponds to the reduction of pyrroline-5-carboxylate to L-proline using NAD(P)H. At physiologic concentrations, has higher specific activity in the presence of NADH. Involved in the cellular response to oxidative stress. In Bos taurus (Bovine), this protein is Pyrroline-5-carboxylate reductase 1, mitochondrial (PYCR1).